The primary structure comprises 365 residues: tRNA/tmRNA (uracil-C(5))-methyltransferase (365 aa).

Gln-189, Tyr-217, Asn-222, Glu-238, and Asp-298 together coordinate S-adenosyl-L-methionine. Catalysis depends on Cys-323, which acts as the Nucleophile. Residue Glu-357 is the Proton acceptor of the active site.

It belongs to the class I-like SAM-binding methyltransferase superfamily. RNA M5U methyltransferase family. TrmA subfamily.

It carries out the reaction uridine(54) in tRNA + S-adenosyl-L-methionine = 5-methyluridine(54) in tRNA + S-adenosyl-L-homocysteine + H(+). The catalysed reaction is uridine(341) in tmRNA + S-adenosyl-L-methionine = 5-methyluridine(341) in tmRNA + S-adenosyl-L-homocysteine + H(+). Functionally, dual-specificity methyltransferase that catalyzes the formation of 5-methyluridine at position 54 (m5U54) in all tRNAs, and that of position 341 (m5U341) in tmRNA (transfer-mRNA). This is tRNA/tmRNA (uracil-C(5))-methyltransferase from Shewanella sp. (strain MR-4).